Reading from the N-terminus, the 179-residue chain is Probable RNA 2'-phosphotransferase (179 aa).

This sequence belongs to the KptA/TPT1 family.

Its function is as follows. Removes the 2'-phosphate from RNA via an intermediate in which the phosphate is ADP-ribosylated by NAD followed by a presumed transesterification to release the RNA and generate ADP-ribose 1''-2''-cyclic phosphate (APPR&gt;P). May function as an ADP-ribosylase. This Fusobacterium nucleatum subsp. nucleatum (strain ATCC 25586 / DSM 15643 / BCRC 10681 / CIP 101130 / JCM 8532 / KCTC 2640 / LMG 13131 / VPI 4355) protein is Probable RNA 2'-phosphotransferase.